The sequence spans 478 residues: Protein nucleotidyltransferase YdiU (478 aa).

The ATP site is built by G84, G86, R87, K107, D119, G120, R170, and R177. D246 acts as the Proton acceptor in catalysis. Residues N247 and D256 each coordinate Mg(2+). D256 is a binding site for ATP.

This sequence belongs to the SELO family. Requires Mg(2+) as cofactor. Mn(2+) is required as a cofactor.

The catalysed reaction is L-seryl-[protein] + ATP = 3-O-(5'-adenylyl)-L-seryl-[protein] + diphosphate. The enzyme catalyses L-threonyl-[protein] + ATP = 3-O-(5'-adenylyl)-L-threonyl-[protein] + diphosphate. It carries out the reaction L-tyrosyl-[protein] + ATP = O-(5'-adenylyl)-L-tyrosyl-[protein] + diphosphate. It catalyses the reaction L-histidyl-[protein] + UTP = N(tele)-(5'-uridylyl)-L-histidyl-[protein] + diphosphate. The catalysed reaction is L-seryl-[protein] + UTP = O-(5'-uridylyl)-L-seryl-[protein] + diphosphate. The enzyme catalyses L-tyrosyl-[protein] + UTP = O-(5'-uridylyl)-L-tyrosyl-[protein] + diphosphate. Its function is as follows. Nucleotidyltransferase involved in the post-translational modification of proteins. It can catalyze the addition of adenosine monophosphate (AMP) or uridine monophosphate (UMP) to a protein, resulting in modifications known as AMPylation and UMPylation. The protein is Protein nucleotidyltransferase YdiU of Escherichia coli (strain SE11).